Reading from the N-terminus, the 541-residue chain is Tryptophan N-monooxygenase 1 (541 aa).

A helical membrane pass occupies residues 21-41; that stretch reads FSTLYLLSTLQAFVAITLVML. Cys477 serves as a coordination point for heme.

This sequence belongs to the cytochrome P450 family. Requires heme as cofactor. Found in all tissues tested. Highest expression in roots, and low expression in stem.

The protein resides in the membrane. It catalyses the reaction L-tryptophan + 2 reduced [NADPH--hemoprotein reductase] + 2 O2 = (E)-(indol-3-yl)acetaldehyde oxime + 2 oxidized [NADPH--hemoprotein reductase] + CO2 + 3 H2O + 2 H(+). In terms of biological role, converts tryptophan to indole-3-acetaldoxime, a precursor for tryptophan-derived glucosinolates and indole-3-acetic acid (IAA). Involved in the biosynthetic pathway to 4-hydroxyindole-3-carbonyl nitrile (4-OH-ICN), a cyanogenic metabolite required for inducible pathogen defense. This Arabidopsis thaliana (Mouse-ear cress) protein is Tryptophan N-monooxygenase 1 (CYP79B2).